Here is a 72-residue protein sequence, read N- to C-terminus: Cell division protein ZapB (72 aa).

Residues 3–71 (LSIIDQLEEK…LRSLLGQIDN (69 aa)) adopt a coiled-coil conformation.

This sequence belongs to the ZapB family. Homodimer. The ends of the coiled-coil dimer bind to each other, forming polymers. Interacts with FtsZ.

The protein resides in the cytoplasm. Its function is as follows. Non-essential, abundant cell division factor that is required for proper Z-ring formation. It is recruited early to the divisome by direct interaction with FtsZ, stimulating Z-ring assembly and thereby promoting cell division earlier in the cell cycle. Its recruitment to the Z-ring requires functional FtsA or ZipA. In Haemophilus ducreyi (strain 35000HP / ATCC 700724), this protein is Cell division protein ZapB.